Here is a 266-residue protein sequence, read N- to C-terminus: tRNA (guanine-N(1)-)-methyltransferase (266 aa).

Residues glycine 113 and 137–142 contribute to the S-adenosyl-L-methionine site; that span reads LGDYVL.

This sequence belongs to the RNA methyltransferase TrmD family. Homodimer.

It is found in the cytoplasm. It carries out the reaction guanosine(37) in tRNA + S-adenosyl-L-methionine = N(1)-methylguanosine(37) in tRNA + S-adenosyl-L-homocysteine + H(+). Specifically methylates guanosine-37 in various tRNAs. The chain is tRNA (guanine-N(1)-)-methyltransferase from Paenarthrobacter aurescens (strain TC1).